We begin with the raw amino-acid sequence, 216 residues long: Octanoyltransferase (216 aa).

The BPL/LPL catalytic domain maps to 35-213; that stretch reads NSNPDFIWIG…IIQEEFNFDF (179 aa). Residues 77–84, 144–146, and 157–159 contribute to the substrate site; these read RGGEVTCH, SIG, and GFS. The active-site Acyl-thioester intermediate is the cysteine 175.

Belongs to the LipB family.

It localises to the cytoplasm. It carries out the reaction octanoyl-[ACP] + L-lysyl-[protein] = N(6)-octanoyl-L-lysyl-[protein] + holo-[ACP] + H(+). The protein operates within protein modification; protein lipoylation via endogenous pathway; protein N(6)-(lipoyl)lysine from octanoyl-[acyl-carrier-protein]: step 1/2. Functionally, catalyzes the transfer of endogenously produced octanoic acid from octanoyl-acyl-carrier-protein onto the lipoyl domains of lipoate-dependent enzymes. Lipoyl-ACP can also act as a substrate although octanoyl-ACP is likely to be the physiological substrate. This is Octanoyltransferase from Prochlorococcus marinus (strain MIT 9312).